Here is a 359-residue protein sequence, read N- to C-terminus: 2-amino-3-carboxymuconate-6-semialdehyde decarboxylase (359 aa).

Over residues 1–13 (MENKETTTTTTTT) the composition is skewed to low complexity. The segment at 1–21 (MENKETTTTTTTTNNGSDKKK) is disordered. The Zn(2+) site is built by H29 and H31. R70 serves as a coordination point for substrate. Residues H197 and D314 each coordinate Zn(2+).

This sequence belongs to the metallo-dependent hydrolases superfamily. ACMSD family. As to quaternary structure, monomer.

The catalysed reaction is 2-amino-3-carboxymuconate 6-semialdehyde + H(+) = 2-aminomuconate 6-semialdehyde + CO2. The protein operates within secondary metabolite metabolism; quinolate metabolism. In terms of biological role, converts alpha-amino-beta-carboxymuconate-epsilon-semialdehyde (ACMS) to alpha-aminomuconate semialdehyde (AMS). This chain is 2-amino-3-carboxymuconate-6-semialdehyde decarboxylase (acmsd), found in Dictyostelium discoideum (Social amoeba).